The following is a 306-amino-acid chain: 4-hydroxy-3-methylbut-2-enyl diphosphate reductase 1 (306 aa).

[4Fe-4S] cluster is bound at residue Cys10. Positions 39 and 72 each coordinate (2E)-4-hydroxy-3-methylbut-2-enyl diphosphate. Dimethylallyl diphosphate-binding residues include His39 and His72. Residues His39 and His72 each coordinate isopentenyl diphosphate. Residue Cys94 participates in [4Fe-4S] cluster binding. His122 provides a ligand contact to (2E)-4-hydroxy-3-methylbut-2-enyl diphosphate. Residue His122 participates in dimethylallyl diphosphate binding. His122 contacts isopentenyl diphosphate. Glu124 (proton donor) is an active-site residue. Residue Thr162 coordinates (2E)-4-hydroxy-3-methylbut-2-enyl diphosphate. Position 192 (Cys192) interacts with [4Fe-4S] cluster. Residues Ser220, Ser221, Asn222, and Ser264 each coordinate (2E)-4-hydroxy-3-methylbut-2-enyl diphosphate. Dimethylallyl diphosphate contacts are provided by Ser220, Ser221, Asn222, and Ser264. Residues Ser220, Ser221, Asn222, and Ser264 each contribute to the isopentenyl diphosphate site.

It belongs to the IspH family. [4Fe-4S] cluster is required as a cofactor.

The catalysed reaction is isopentenyl diphosphate + 2 oxidized [2Fe-2S]-[ferredoxin] + H2O = (2E)-4-hydroxy-3-methylbut-2-enyl diphosphate + 2 reduced [2Fe-2S]-[ferredoxin] + 2 H(+). The enzyme catalyses dimethylallyl diphosphate + 2 oxidized [2Fe-2S]-[ferredoxin] + H2O = (2E)-4-hydroxy-3-methylbut-2-enyl diphosphate + 2 reduced [2Fe-2S]-[ferredoxin] + 2 H(+). Its pathway is isoprenoid biosynthesis; dimethylallyl diphosphate biosynthesis; dimethylallyl diphosphate from (2E)-4-hydroxy-3-methylbutenyl diphosphate: step 1/1. It functions in the pathway isoprenoid biosynthesis; isopentenyl diphosphate biosynthesis via DXP pathway; isopentenyl diphosphate from 1-deoxy-D-xylulose 5-phosphate: step 6/6. Its function is as follows. Catalyzes the conversion of 1-hydroxy-2-methyl-2-(E)-butenyl 4-diphosphate (HMBPP) into a mixture of isopentenyl diphosphate (IPP) and dimethylallyl diphosphate (DMAPP). Acts in the terminal step of the DOXP/MEP pathway for isoprenoid precursor biosynthesis. The sequence is that of 4-hydroxy-3-methylbut-2-enyl diphosphate reductase 1 from Rhodopseudomonas palustris (strain ATCC BAA-98 / CGA009).